The chain runs to 392 residues: Neutrophil cytosol factor 1 (392 aa).

In terms of domain architecture, PX spans 4–125; sequence HFIRHIALLG…NFFKVRPDDL (122 aa). SH3 domains are found at residues 156–215 and 226–285; these read IILQ…PLDS and YAGE…KAGQ. The disordered stretch occupies residues 290–392; the sequence is AKSQIKSRGA…STKRKLASAV (103 aa). Phosphoserine is present on residues Ser304 and Ser305. The span at 310 to 319 shows a compositional bias: basic residues; the sequence is HSIHQRSRKR. Phosphoserine is present on residues Ser321, Ser329, and Ser348. Residues 376-385 show a composition bias toward basic and acidic residues; the sequence is ILHRCSESTK.

In terms of assembly, component of the phagocyte NADPH oxidase complex composed of an obligatory core heterodimer formed by the membrane proteins CYBA and CYBB and the cytosolic regulatory subunits NCF1/p47-phox, NCF2/p67-phox, NCF4/p40-phox and the small GTPase RAC1 or RAC2. Part of a cytosolic complex composed at least by NCF1, NCF2 and NCF4. Interacts (via C-terminus) with NCF2 (via the C-terminal SH3 domain). Interacts with NCF4. Interacts with CYBB. Interacts (via the second SH3 domain) with CYBA; interaction is phosphorylation-dependent. Interacts with NOXA1. Interacts with ADAM15. Interacts with TRAF4. Interacts with FASLG. Interacts with PARK7 (via C-terminus); the interaction is enhanced by LPS and modulates NCF1 phosphorylation and membrane translocation. In terms of processing, phosphorylated by PRKCD; phosphorylation induces activation of NCF1, leading to assembly and activation of the NADPH oxidase complex.

It localises to the cytoplasm. Its subcellular location is the cytosol. The protein resides in the membrane. In terms of biological role, subunit of the phagocyte NADPH oxidase complex that mediates the transfer of electrons from cytosolic NADPH to O2 to produce the superoxide anion (O2(-)). In the activated complex, electrons are first transferred from NADPH to flavin adenine dinucleotide (FAD) and subsequently transferred via two heme molecules to molecular oxygen, producing superoxide through an outer-sphere reaction. Activation of the NADPH oxidase complex is initiated by the assembly of cytosolic subunits of the NADPH oxidase complex with the core NADPH oxidase complex to form a complex at the plasma membrane or phagosomal membrane. This activation process is initiated by phosphorylation dependent binding of the cytosolic NCF1/p47-phox subunit to the C-terminus of CYBA/p22-phox. The chain is Neutrophil cytosol factor 1 from Bos taurus (Bovine).